The following is a 169-amino-acid chain: Lipoprotein signal peptidase (169 aa).

4 consecutive transmembrane segments (helical) span residues 15-35 (WLWL…VVMN), 47-67 (ILPF…SFLS), 75-95 (WLFT…MSKL), and 107-127 (AMII…GFVV). Active-site residues include Asp128 and Asp146. Residues 141–161 (AFNLADMAICLGAAMIILDGF) form a helical membrane-spanning segment.

Belongs to the peptidase A8 family.

The protein localises to the cell inner membrane. The enzyme catalyses Release of signal peptides from bacterial membrane prolipoproteins. Hydrolyzes -Xaa-Yaa-Zaa-|-(S,diacylglyceryl)Cys-, in which Xaa is hydrophobic (preferably Leu), and Yaa (Ala or Ser) and Zaa (Gly or Ala) have small, neutral side chains.. Its pathway is protein modification; lipoprotein biosynthesis (signal peptide cleavage). This protein specifically catalyzes the removal of signal peptides from prolipoproteins. This chain is Lipoprotein signal peptidase, found in Vibrio parahaemolyticus serotype O3:K6 (strain RIMD 2210633).